Reading from the N-terminus, the 281-residue chain is Pseudouridine-5'-phosphate glycosidase (281 aa).

Glu9 serves as the catalytic Proton donor. The substrate site is built by Lys69 and Val89. Asp118 is a binding site for Mn(2+). Position 120–122 (120–122) interacts with substrate; sequence SAD. The active-site Nucleophile is the Lys139.

This sequence belongs to the pseudouridine-5'-phosphate glycosidase family. In terms of assembly, homotrimer. The cofactor is Mn(2+).

The catalysed reaction is D-ribose 5-phosphate + uracil = psi-UMP + H2O. Its function is as follows. Catalyzes the reversible cleavage of pseudouridine 5'-phosphate (PsiMP) to ribose 5-phosphate and uracil. Functions biologically in the cleavage direction, as part of a pseudouridine degradation pathway. The chain is Pseudouridine-5'-phosphate glycosidase from Thermus thermophilus (strain ATCC BAA-163 / DSM 7039 / HB27).